A 416-amino-acid polypeptide reads, in one-letter code: Serine hydroxymethyltransferase (416 aa).

(6S)-5,6,7,8-tetrahydrofolate-binding positions include Leu-121 and 125–127 (GHL). Lys-229 carries the post-translational modification N6-(pyridoxal phosphate)lysine.

It belongs to the SHMT family. Homodimer. The cofactor is pyridoxal 5'-phosphate.

The protein resides in the cytoplasm. The catalysed reaction is (6R)-5,10-methylene-5,6,7,8-tetrahydrofolate + glycine + H2O = (6S)-5,6,7,8-tetrahydrofolate + L-serine. Its pathway is one-carbon metabolism; tetrahydrofolate interconversion. It participates in amino-acid biosynthesis; glycine biosynthesis; glycine from L-serine: step 1/1. Catalyzes the reversible interconversion of serine and glycine with tetrahydrofolate (THF) serving as the one-carbon carrier. This reaction serves as the major source of one-carbon groups required for the biosynthesis of purines, thymidylate, methionine, and other important biomolecules. Also exhibits THF-independent aldolase activity toward beta-hydroxyamino acids, producing glycine and aldehydes, via a retro-aldol mechanism. This Neisseria meningitidis serogroup C / serotype 2a (strain ATCC 700532 / DSM 15464 / FAM18) protein is Serine hydroxymethyltransferase.